Reading from the N-terminus, the 141-residue chain is Small ribosomal subunit protein eS12 (141 aa).

The protein belongs to the eukaryotic ribosomal protein eS12 family. As to quaternary structure, component of the small ribosomal subunit. Mature ribosomes consist of a small (40S) and a large (60S) subunit. The 40S subunit contains about 32 different proteins and 1 molecule of RNA (18S). The 60S subunit contains about 42 different proteins and 3 molecules of RNA (28S, 5.8S and 5S).

It localises to the cytoplasm. Its function is as follows. Component of the ribosome, a large ribonucleoprotein complex responsible for the synthesis of proteins in the cell. The small ribosomal subunit (SSU) binds messenger RNAs (mRNAs) and translates the encoded message by selecting cognate aminoacyl-transfer RNA (tRNA) molecules. The large subunit (LSU) contains the ribosomal catalytic site termed the peptidyl transferase center (PTC), which catalyzes the formation of peptide bonds, thereby polymerizing the amino acids delivered by tRNAs into a polypeptide chain. The nascent polypeptides leave the ribosome through a tunnel in the LSU and interact with protein factors that function in enzymatic processing, targeting, and the membrane insertion of nascent chains at the exit of the ribosomal tunnel. The protein is Small ribosomal subunit protein eS12 of Plasmodium falciparum (isolate 3D7).